A 583-amino-acid polypeptide reads, in one-letter code: MPRGLELLIAQTILQGFDAQYGRFLEVTSGAQQRFEQADWHAVQQAMKSRIHLYDHHVGLVVEQLRCITDGKSTDADFLLRVKEHYTRLLPDYPRFEIAESFFNSVYCRLFDHRSLTPERLFIFSSQPERRFRTIPRPLAKDFFPDHGWELLLMRILSDLPLRLPWQNKSRDIRYIIAHLTETLGEDALPRCHVQVANELFYRNKAAWLVGKLTTPDGTLPFLLPIHRTDEGELFVDTCLTTTAEASIVFGFARSYFMVYAPLPAALVEWLREILPGKTTAELYMAIGCQKHAKTESYREYLCYLAESDEKFIEAPGIRGMVMLVFTLPGFDRVFKIIKDKFAPQKEMSAAHVRACYQLVKEHDRVGRMADTQEFENFVLDKRQIDPALMALLRQEVPEKITDLGEHIVIRHLYIERRMVPLNIWLEQVEGQQLRDAIEEYGNAIRQLAAANIFPGDMLFKNFGVTRHGRVVFYDYDEICYMTEVNFRDIPPARYPEDELASEPWYSVSPGDVFPEEFRHWLCADPRIGPLFEEMHADLFRADYWRALQTRIKEGHVEDVYAYRRRQRFSVRYGAISSTANSS.

Residues 315-321 (APGIRGM) and Lys336 contribute to the ATP site. Residue Asp371 is part of the active site.

This sequence belongs to the AceK family.

The protein localises to the cytoplasm. It carries out the reaction L-seryl-[isocitrate dehydrogenase] + ATP = O-phospho-L-seryl-[isocitrate dehydrogenase] + ADP + H(+). Bifunctional enzyme which can phosphorylate or dephosphorylate isocitrate dehydrogenase (IDH) on a specific serine residue. This is a regulatory mechanism which enables bacteria to bypass the Krebs cycle via the glyoxylate shunt in response to the source of carbon. When bacteria are grown on glucose, IDH is fully active and unphosphorylated, but when grown on acetate or ethanol, the activity of IDH declines drastically concomitant with its phosphorylation. The sequence is that of Isocitrate dehydrogenase kinase/phosphatase from Salmonella paratyphi B (strain ATCC BAA-1250 / SPB7).